Reading from the N-terminus, the 437-residue chain is Glutamate-1-semialdehyde 2,1-aminomutase (437 aa).

Position 279 is an N6-(pyridoxal phosphate)lysine (lysine 279).

The protein belongs to the class-III pyridoxal-phosphate-dependent aminotransferase family. HemL subfamily. In terms of assembly, homodimer. It depends on pyridoxal 5'-phosphate as a cofactor.

It is found in the cytoplasm. It catalyses the reaction (S)-4-amino-5-oxopentanoate = 5-aminolevulinate. It functions in the pathway porphyrin-containing compound metabolism; protoporphyrin-IX biosynthesis; 5-aminolevulinate from L-glutamyl-tRNA(Glu): step 2/2. The polypeptide is Glutamate-1-semialdehyde 2,1-aminomutase (Sorangium cellulosum (strain So ce56) (Polyangium cellulosum (strain So ce56))).